The sequence spans 294 residues: Acetyl-coenzyme A carboxylase carboxyl transferase subunit beta (294 aa).

Residues 29 to 294 (LWEKCPECGQ…TQVVKLQTNA (266 aa)) form the CoA carboxyltransferase N-terminal domain. Zn(2+)-binding residues include Cys-33, Cys-36, Cys-52, and Cys-55. A C4-type zinc finger spans residues 33–55 (CPECGQVVYRKDLIDNCSVCSNC).

This sequence belongs to the AccD/PCCB family. Acetyl-CoA carboxylase is a heterohexamer composed of biotin carboxyl carrier protein (AccB), biotin carboxylase (AccC) and two subunits each of ACCase subunit alpha (AccA) and ACCase subunit beta (AccD). Requires Zn(2+) as cofactor.

The protein resides in the cytoplasm. It carries out the reaction N(6)-carboxybiotinyl-L-lysyl-[protein] + acetyl-CoA = N(6)-biotinyl-L-lysyl-[protein] + malonyl-CoA. The protein operates within lipid metabolism; malonyl-CoA biosynthesis; malonyl-CoA from acetyl-CoA: step 1/1. Its function is as follows. Component of the acetyl coenzyme A carboxylase (ACC) complex. Biotin carboxylase (BC) catalyzes the carboxylation of biotin on its carrier protein (BCCP) and then the CO(2) group is transferred by the transcarboxylase to acetyl-CoA to form malonyl-CoA. The polypeptide is Acetyl-coenzyme A carboxylase carboxyl transferase subunit beta (Prochlorococcus marinus (strain NATL2A)).